A 66-amino-acid polypeptide reads, in one-letter code: Large ribosomal subunit protein bL35 (66 aa).

Positions 1–26 are enriched in basic residues; it reads MPKMKTHRGAAKRFKKTGTGKLKRGH. Residues 1-48 form a disordered region; that stretch reads MPKMKTHRGAAKRFKKTGTGKLKRGHAYTSHLFANKTQKQKRKLRKAT.

It belongs to the bacterial ribosomal protein bL35 family.

The chain is Large ribosomal subunit protein bL35 from Geobacillus sp. (strain WCH70).